Reading from the N-terminus, the 239-residue chain is Pyridoxine 5'-phosphate synthase (239 aa).

Residue N7 coordinates 3-amino-2-oxopropyl phosphate. 9-10 (DH) serves as a coordination point for 1-deoxy-D-xylulose 5-phosphate. 3-amino-2-oxopropyl phosphate is bound at residue R18. Catalysis depends on H43, which acts as the Proton acceptor. 1-deoxy-D-xylulose 5-phosphate is bound by residues R45 and H50. The Proton acceptor role is filled by E70. T100 serves as a coordination point for 1-deoxy-D-xylulose 5-phosphate. Catalysis depends on H191, which acts as the Proton donor. Residues G192 and 213–214 (GH) each bind 3-amino-2-oxopropyl phosphate.

Belongs to the PNP synthase family. As to quaternary structure, homooctamer; tetramer of dimers.

The protein resides in the cytoplasm. It catalyses the reaction 3-amino-2-oxopropyl phosphate + 1-deoxy-D-xylulose 5-phosphate = pyridoxine 5'-phosphate + phosphate + 2 H2O + H(+). Its pathway is cofactor biosynthesis; pyridoxine 5'-phosphate biosynthesis; pyridoxine 5'-phosphate from D-erythrose 4-phosphate: step 5/5. Its function is as follows. Catalyzes the complicated ring closure reaction between the two acyclic compounds 1-deoxy-D-xylulose-5-phosphate (DXP) and 3-amino-2-oxopropyl phosphate (1-amino-acetone-3-phosphate or AAP) to form pyridoxine 5'-phosphate (PNP) and inorganic phosphate. This is Pyridoxine 5'-phosphate synthase from Geobacter sp. (strain M21).